Reading from the N-terminus, the 1371-residue chain is DNA-directed RNA polymerase subunit beta (1371 aa).

The protein belongs to the RNA polymerase beta chain family. The RNAP catalytic core consists of 2 alpha, 1 beta, 1 beta' and 1 omega subunit. When a sigma factor is associated with the core the holoenzyme is formed, which can initiate transcription.

It catalyses the reaction RNA(n) + a ribonucleoside 5'-triphosphate = RNA(n+1) + diphosphate. Functionally, DNA-dependent RNA polymerase catalyzes the transcription of DNA into RNA using the four ribonucleoside triphosphates as substrates. The protein is DNA-directed RNA polymerase subunit beta of Citrifermentans bemidjiense (strain ATCC BAA-1014 / DSM 16622 / JCM 12645 / Bem) (Geobacter bemidjiensis).